The chain runs to 769 residues: Subtilisin-like protease 3 (769 aa).

6 N-linked (GlcNAc...) asparagine glycosylation sites follow: N68, N102, N108, N295, N316, and N356. A compositionally biased stretch (basic residues) spans 293 to 302; that stretch reads KINHSNKHKN. Residues 293-329 form a disordered region; that stretch reads KINHSNKHKNNNNNNNNNDYHNNNKSNYHSHSSAKCQ. Low complexity predominate over residues 303–325; it reads NNNNNNNNDYHNNNKSNYHSHSS. A Peptidase S8 domain is found at 345–756; that stretch reads GYDIIQMEEG…GGFINVYDLV (412 aa). D372 functions as the Charge relay system in the catalytic mechanism. The tract at residues 468-493 is disordered; it reads NIKSSDNIKSSDNINSSDNIKSSDNN. 2 N-linked (GlcNAc...) asparagine glycosylation sites follow: N482 and N515. H523 functions as the Charge relay system in the catalytic mechanism. Residues N584 and N616 are each glycosylated (N-linked (GlcNAc...) asparagine). Residue S701 is the Charge relay system of the active site. The N-linked (GlcNAc...) asparagine glycan is linked to N720.

It belongs to the peptidase S8 family.

The protein localises to the secreted. The catalysed reaction is Hydrolysis of proteins with broad specificity for peptide bonds, and a preference for a large uncharged residue in P1. Hydrolyzes peptide amides.. Its function is as follows. Serine protease which may cleave PFN/profilin. This chain is Subtilisin-like protease 3, found in Plasmodium falciparum (isolate 3D7).